A 65-amino-acid polypeptide reads, in one-letter code: UPF0434 protein Rpal_0270 (65 aa).

The protein belongs to the UPF0434 family.

This chain is UPF0434 protein Rpal_0270, found in Rhodopseudomonas palustris (strain TIE-1).